A 1064-amino-acid polypeptide reads, in one-letter code: mRNA 3'-end-processing protein RNA14 (1064 aa).

2 disordered regions span residues 34-106 (ASQS…APSA) and 119-192 (SETP…ASAV). Residues 44–54 (AQDQKSHSTLL) show a composition bias toward polar residues. 2 stretches are compositionally biased toward low complexity: residues 66-86 (SAIP…AIGD) and 151-191 (QPAE…AASA). 5 HAT repeats span residues 327–364 (SNFA…YIRR), 377–412 (DVRS…FVAS), 423–456 (AKND…FESS), 673–706 (QRGA…FARR), and 777–811 (NDDN…YEYT). Disordered regions lie at residues 888–985 (AVPT…DRSG) and 1022–1064 (LPGA…SGRY). Composition is skewed to basic and acidic residues over residues 899-910 (SYKRPAPEDIPP) and 933-948 (RYPE…RYRD). The span at 1026–1042 (GMPPAPPISRGPPPPPM) shows a compositional bias: pro residues.

Its subcellular location is the nucleus. It localises to the cytoplasm. Functionally, component of the cleavage factor IA (CFIA) complex, which is involved in the endonucleolytic cleavage during polyadenylation-dependent pre-mRNA 3'-end formation. This Cryptococcus neoformans var. neoformans serotype D (strain B-3501A) (Filobasidiella neoformans) protein is mRNA 3'-end-processing protein RNA14 (RNA14).